A 468-amino-acid chain; its full sequence is Immunoglobulin superfamily member 21 (468 aa).

The N-terminal stretch at 1 to 24 (MQAAPSLRRASCLLLAAILDLARG) is a signal peptide. Residues 25 to 132 (YLTVNIEPLP…RATREKVVLA (108 aa)) form the Ig-like 1 domain. A disulfide bond links cysteine 46 and cysteine 116. 3 N-linked (GlcNAc...) asparagine glycosylation sites follow: asparagine 82, asparagine 165, and asparagine 407. The Ig-like 2 domain occupies 344–429 (PKIMMTPSRA…GSTDTHTRLI (86 aa)).

In terms of assembly, interacts (Ig-like 1 domain) with NRXN2 (via Laminin G-like 1 domain) in a trans-interaction manner. As to expression, expressed in brain (at protein levels). Highly expressed in the pyramidal cell layer of the dorsal and ventral hippocampal CA1 and CA3 regions, layers 5 and 6 of the cortex, the thalamus and the pons and weakly expressed in the cerebellum. Expressed in neurons but not in glia.

It localises to the postsynaptic cell membrane. In terms of biological role, involved in synaptic inhibition in the brain. Selectively regulates inhibitory presynaptic differentiation through interacting with presynaptic NRXN2. The chain is Immunoglobulin superfamily member 21 (Igsf21) from Mus musculus (Mouse).